The chain runs to 469 residues: Diacetylchitobiose binding protein NgcE (469 aa).

Positions Met-1–Asp-37 form a signal peptide, tat-type signal. The interval Cys-30–Phe-54 is disordered. Residues Ser-35–Lys-48 are compositionally biased toward basic and acidic residues.

Belongs to the bacterial solute-binding protein 1 family. In terms of assembly, the complex is composed of two ATP-binding proteins (MsiK), two transmembrane proteins (NgcF and NgcG) and a solute-binding protein (NgcE). Post-translationally, predicted to be exported by the Tat system. The position of the signal peptide cleavage has not been experimentally proven.

The protein resides in the cell membrane. Its function is as follows. Part of the ABC transporter complex NgcEFG-MsiK involved in N,N'-diacetylchitobiose ((GlcNAc)2) uptake. Binds (GlcNAc)2. Can also bind GlcNAc. The sequence is that of Diacetylchitobiose binding protein NgcE from Streptomyces coelicolor (strain ATCC BAA-471 / A3(2) / M145).